We begin with the raw amino-acid sequence, 422 residues long: Nuclear hormone receptor family member nhr-54 (422 aa).

The nuclear receptor DNA-binding region spans 14-92 (SVKCAICYKA…LGMTTENVRT (79 aa)). 2 NR C4-type zinc fingers span residues 17 to 37 (CAICYKAGHGQHFGVETCRAC) and 53 to 80 (CTRKSGKCKIGSDETKDVMCKFCRFKKC). The NR LBD domain occupies 161–422 (PDDDVIVELN…VFTEPEFFRV (262 aa)).

Belongs to the nuclear hormone receptor family.

It localises to the nucleus. In terms of biological role, orphan nuclear receptor. The chain is Nuclear hormone receptor family member nhr-54 (nhr-54) from Caenorhabditis elegans.